The chain runs to 909 residues: Phosphoenolpyruvate carboxylase (909 aa).

Residues His-151 and Lys-578 contribute to the active site.

This sequence belongs to the PEPCase type 1 family. The cofactor is Mg(2+).

It carries out the reaction oxaloacetate + phosphate = phosphoenolpyruvate + hydrogencarbonate. Its function is as follows. Forms oxaloacetate, a four-carbon dicarboxylic acid source for the tricarboxylic acid cycle. The sequence is that of Phosphoenolpyruvate carboxylase from Caulobacter vibrioides (strain ATCC 19089 / CIP 103742 / CB 15) (Caulobacter crescentus).